Reading from the N-terminus, the 305-residue chain is Acetyl-coenzyme A carboxylase carboxyl transferase subunit beta (305 aa).

The region spanning 27–296 (LWVKCSSCRE…SPAKAELAGR (270 aa)) is the CoA carboxyltransferase N-terminal domain. Residues C31, C34, C50, and C53 each contribute to the Zn(2+) site. A C4-type zinc finger spans residues 31 to 53 (CSSCRELIYKKQLNDNLKVCPKC).

This sequence belongs to the AccD/PCCB family. As to quaternary structure, acetyl-CoA carboxylase is a heterohexamer composed of biotin carboxyl carrier protein (AccB), biotin carboxylase (AccC) and two subunits each of ACCase subunit alpha (AccA) and ACCase subunit beta (AccD). It depends on Zn(2+) as a cofactor.

It is found in the cytoplasm. The enzyme catalyses N(6)-carboxybiotinyl-L-lysyl-[protein] + acetyl-CoA = N(6)-biotinyl-L-lysyl-[protein] + malonyl-CoA. The protein operates within lipid metabolism; malonyl-CoA biosynthesis; malonyl-CoA from acetyl-CoA: step 1/1. Functionally, component of the acetyl coenzyme A carboxylase (ACC) complex. Biotin carboxylase (BC) catalyzes the carboxylation of biotin on its carrier protein (BCCP) and then the CO(2) group is transferred by the transcarboxylase to acetyl-CoA to form malonyl-CoA. The protein is Acetyl-coenzyme A carboxylase carboxyl transferase subunit beta of Chloroflexus aurantiacus (strain ATCC 29366 / DSM 635 / J-10-fl).